A 149-amino-acid polypeptide reads, in one-letter code: Ribosomal RNA large subunit methyltransferase H (149 aa).

Residues L71, G98, and 117 to 122 (LSKMTL) each bind S-adenosyl-L-methionine.

The protein belongs to the RNA methyltransferase RlmH family. In terms of assembly, homodimer.

The protein resides in the cytoplasm. It catalyses the reaction pseudouridine(1915) in 23S rRNA + S-adenosyl-L-methionine = N(3)-methylpseudouridine(1915) in 23S rRNA + S-adenosyl-L-homocysteine + H(+). Its function is as follows. Specifically methylates the pseudouridine at position 1915 (m3Psi1915) in 23S rRNA. This is Ribosomal RNA large subunit methyltransferase H from Campylobacter fetus subsp. fetus (strain 82-40).